A 384-amino-acid polypeptide reads, in one-letter code: Substance-K receptor (384 aa).

The Extracellular segment spans residues 1–32 (MGAHASVTDTNILSGLESNATGVTAFSMPGWQ). N-linked (GlcNAc...) asparagine glycosylation occurs at Asn19. A helical transmembrane segment spans residues 33 to 56 (LALWATAYLALVLVAVTGNATVIW). Residues 57–69 (IILAHERMRTVTN) are Cytoplasmic-facing. A helical transmembrane segment spans residues 70 to 90 (YFIINLALADLCMAAFNATFN). Over 91 to 107 (FIYASHNIWYFGSTFCY) the chain is Extracellular. Cys106 and Cys181 are disulfide-bonded. Residues 108-129 (FQNLFPVTAMFVSIYSMTAIAA) traverse the membrane as a helical segment. Topologically, residues 130-149 (DRYMAIVHPFQPRLSAPSTK) are cytoplasmic. The chain crosses the membrane as a helical span at residues 150 to 170 (AVIAVIWLVALALASPQCFYS). Over 171–196 (TITVDQGATKCVVAWPNDNGGKMLLL) the chain is Extracellular. The helical transmembrane segment at 197–218 (YHLVVFVLIYFLPLVVMFAAYS) threads the bilayer. Topologically, residues 219–251 (VIGLTLWKRAVPRHQAHGANLRHLQAKKKFVKA) are cytoplasmic. A helical membrane pass occupies residues 252 to 272 (MVLVVVTFAICWLPYHLYFIL). Over 273–290 (GTFQEDIYYRKFIQQVYL) the chain is Extracellular. A helical membrane pass occupies residues 291 to 310 (ALFWLAMSSTMYNPIIYCCL). The Cytoplasmic segment spans residues 311–384 (NHRFRSGFRL…GPQDGEPAGP (74 aa)). Cys324 carries the S-palmitoyl cysteine lipid modification. Residues 365–384 (HSEATNGQVGGPQDGEPAGP) are disordered.

Belongs to the G-protein coupled receptor 1 family.

The protein resides in the cell membrane. This is a receptor for the tachykinin neuropeptide substance K (neurokinin A). It is associated with G proteins that activate a phosphatidylinositol-calcium second messenger system. The rank order of affinity of this receptor to tachykinins is: substance K &gt; neuromedin-K &gt; substance P. The polypeptide is Substance-K receptor (Tacr2) (Mus musculus (Mouse)).